A 391-amino-acid chain; its full sequence is ATP phosphoribosyltransferase regulatory subunit (391 aa).

It belongs to the class-II aminoacyl-tRNA synthetase family. HisZ subfamily. As to quaternary structure, heteromultimer composed of HisG and HisZ subunits.

Its subcellular location is the cytoplasm. Its pathway is amino-acid biosynthesis; L-histidine biosynthesis; L-histidine from 5-phospho-alpha-D-ribose 1-diphosphate: step 1/9. In terms of biological role, required for the first step of histidine biosynthesis. May allow the feedback regulation of ATP phosphoribosyltransferase activity by histidine. The sequence is that of ATP phosphoribosyltransferase regulatory subunit from Prochlorococcus marinus (strain NATL2A).